Consider the following 107-residue polypeptide: Somatoliberin (107 aa).

An N-terminal signal peptide occupies residues 1-19 (MPLWVFFVILTLTNGSHCS). Positions 20 to 30 (PSPSLPFRIRR) are excised as a propeptide. Residue leucine 74 is modified to Leucine amide. Residues 77–107 (QVDSMWADHRQMSLESLLAALLQKHSRDSQG) constitute a propeptide that is removed on maturation.

This sequence belongs to the glucagon family.

It localises to the secreted. GRF is released by the hypothalamus and acts on the adenohypophyse to stimulate the secretion of growth hormone. The protein is Somatoliberin (GHRH) of Mesocricetus auratus (Golden hamster).